We begin with the raw amino-acid sequence, 317 residues long: Apolipoprotein E (317 aa).

Residues 1 to 18 form the signal peptide; it reads MKVLWAALLVTFLAGCQA. Tandem repeats lie at residues 80–101, 102–123, 124–145, 146–167, 168–189, 190–211, 212–233, and 234–255. The segment at 80–255 is 8 X 22 AA approximate tandem repeats; it reads TLMDETMKEL…RLDEVKEQVA (176 aa). Residue M143 is modified to Methionine sulfoxide. Phosphoserine is present on S147. An LDL and other lipoprotein receptors binding region spans residues 158–168; sequence HLRKLRKRLLR. Position 162-165 (162-165) interacts with heparin; it reads LRKR. Positions 210-290 are lipid-binding and lipoprotein association; sequence AATVGSLAGQ…SWFEPLVEDM (81 aa). A glycan (O-linked (GalNAc...) threonine) is linked at T212. 229 to 236 contacts heparin; sequence GERLRARM. The interval 266–317 is homooligomerization; sequence QQISLQAEAFQARLKSWFEPLVEDMQRQWAGLVEKVQAAVGASTAPVPSDNH. The segment at 278 to 290 is specificity for association with VLDL; the sequence is RLKSWFEPLVEDM.

This sequence belongs to the apolipoprotein A1/A4/E family. Homotetramer. May interact with ABCA1; functionally associated with ABCA1 in the biogenesis of HDLs. May interact with APP/A4 amyloid-beta peptide; the interaction is extremely stable in vitro but its physiological significance is unclear. May interact with MAPT. May interact with MAP2. In the cerebrospinal fluid, interacts with secreted SORL1. Interacts with PMEL; this allows the loading of PMEL luminal fragment on ILVs to induce fibril nucleation. Post-translationally, APOE exists as multiple glycosylated and sialylated glycoforms within cells and in plasma. The extent of glycosylation and sialylation are tissue and context specific. In terms of processing, glycated in plasma VLDL. Phosphorylated by FAM20C in the extracellular medium.

It localises to the secreted. It is found in the extracellular space. The protein resides in the extracellular matrix. Its subcellular location is the extracellular vesicle. The protein localises to the endosome. It localises to the multivesicular body. Functionally, APOE is an apolipoprotein, a protein associating with lipid particles, that mainly functions in lipoprotein-mediated lipid transport between organs via the plasma and interstitial fluids. APOE is a core component of plasma lipoproteins and is involved in their production, conversion and clearance. Apolipoproteins are amphipathic molecules that interact both with lipids of the lipoprotein particle core and the aqueous environment of the plasma. As such, APOE associates with chylomicrons, chylomicron remnants, very low density lipoproteins (VLDL) and intermediate density lipoproteins (IDL) but shows a preferential binding to high-density lipoproteins (HDL). It also binds a wide range of cellular receptors including the LDL receptor/LDLR, the LDL receptor-related proteins LRP1, LRP2 and LRP8 and the very low-density lipoprotein receptor/VLDLR that mediate the cellular uptake of the APOE-containing lipoprotein particles. Finally, APOE also has a heparin-binding activity and binds heparan-sulfate proteoglycans on the surface of cells, a property that supports the capture and the receptor-mediated uptake of APOE-containing lipoproteins by cells. A main function of APOE is to mediate lipoprotein clearance through the uptake of chylomicrons, VLDLs, and HDLs by hepatocytes. APOE is also involved in the biosynthesis by the liver of VLDLs as well as their uptake by peripheral tissues ensuring the delivery of triglycerides and energy storage in muscle, heart and adipose tissues. By participating in the lipoprotein-mediated distribution of lipids among tissues, APOE plays a critical role in plasma and tissues lipid homeostasis. APOE is also involved in two steps of reverse cholesterol transport, the HDLs-mediated transport of cholesterol from peripheral tissues to the liver, and thereby plays an important role in cholesterol homeostasis. First, it is functionally associated with ABCA1 in the biogenesis of HDLs in tissues. Second, it is enriched in circulating HDLs and mediates their uptake by hepatocytes. APOE also plays an important role in lipid transport in the central nervous system, regulating neuron survival and sprouting. The protein is Apolipoprotein E (APOE) of Rhinopithecus roxellana (Golden snub-nosed monkey).